Reading from the N-terminus, the 131-residue chain is L-aspartate semialdehyde sulfurtransferase iron-sulfur subunit (131 aa).

4Fe-4S ferredoxin-type domains follow at residues 73-102 (KVIK…MDED) and 103-131 (YNVV…EIFE). [4Fe-4S] cluster contacts are provided by Cys82, Cys85, Cys88, Cys92, Cys112, Cys115, Cys118, and Cys122.

May form a complex with MJ0100. Requires [4Fe-4S] cluster as cofactor.

It participates in amino-acid biosynthesis. Functionally, required for O-acetylhomoserine sulfhydrylase (OAHS)-independent homocysteine (Hcy) biosynthesis. Together with MJ0100, catalyzes the condensation of sulfide with aspartate semialdehyde to generate homocysteine. May be involved in the reduction of the disulfide formed in MJ0100. This Methanocaldococcus jannaschii (strain ATCC 43067 / DSM 2661 / JAL-1 / JCM 10045 / NBRC 100440) (Methanococcus jannaschii) protein is L-aspartate semialdehyde sulfurtransferase iron-sulfur subunit.